The chain runs to 410 residues: Adenosylhomocysteinase (410 aa).

Substrate contacts are provided by Asp117 and Glu142. NAD(+) is bound at residue 143–145 (TTT). Substrate contacts are provided by Lys172 and Asp176. NAD(+)-binding positions include Asn177, 206 to 211 (GYGYCG), Glu229, 285 to 287 (AGH), and Asn332.

It belongs to the adenosylhomocysteinase family. The cofactor is NAD(+).

It localises to the cytoplasm. It catalyses the reaction S-adenosyl-L-homocysteine + H2O = L-homocysteine + adenosine. The protein operates within amino-acid biosynthesis; L-homocysteine biosynthesis; L-homocysteine from S-adenosyl-L-homocysteine: step 1/1. Functionally, may play a key role in the regulation of the intracellular concentration of adenosylhomocysteine. This chain is Adenosylhomocysteinase, found in Thermoplasma volcanium (strain ATCC 51530 / DSM 4299 / JCM 9571 / NBRC 15438 / GSS1).